A 242-amino-acid polypeptide reads, in one-letter code: MSLTLLPAVDVRDGKAVRLRQGESGSETDYGSPLDAARTWVDAGAQWIHLVDLDAAFGTGDNRAQLREIVRQLGDKVNIEMSGGVRDDASLDAALDAGAARVNIGTAALENPEWTARVIDKYGDKVAVGLDVRGHTLAARGWVKEGGGLFETMRFLDDAGCSRYVVTDVTRDGMMSGPNIDLLREVAERTDARVTASGGISKLDDLRAIKELLPLGVDSAILGKSLYAGAFTLEEALAVANA.

Catalysis depends on Asp10, which acts as the Proton acceptor. Asp131 serves as the catalytic Proton donor.

Belongs to the HisA/HisF family.

It is found in the cytoplasm. It catalyses the reaction 1-(5-phospho-beta-D-ribosyl)-5-[(5-phospho-beta-D-ribosylamino)methylideneamino]imidazole-4-carboxamide = 5-[(5-phospho-1-deoxy-D-ribulos-1-ylimino)methylamino]-1-(5-phospho-beta-D-ribosyl)imidazole-4-carboxamide. It participates in amino-acid biosynthesis; L-histidine biosynthesis; L-histidine from 5-phospho-alpha-D-ribose 1-diphosphate: step 4/9. This Bifidobacterium animalis subsp. lactis (strain AD011) protein is 1-(5-phosphoribosyl)-5-[(5-phosphoribosylamino)methylideneamino] imidazole-4-carboxamide isomerase.